We begin with the raw amino-acid sequence, 375 residues long: N5-carboxyaminoimidazole ribonucleotide synthase (375 aa).

ATP is bound by residues R108, K148, 153 to 159 (GYDGKGQ), 183 to 186 (EQYL), E191, H214, and 268 to 269 (NE). The region spanning 112 to 298 (KQTLQDSGSN…QFDTHIKAIT (187 aa)) is the ATP-grasp domain.

It belongs to the PurK/PurT family. In terms of assembly, homodimer.

The catalysed reaction is 5-amino-1-(5-phospho-beta-D-ribosyl)imidazole + hydrogencarbonate + ATP = 5-carboxyamino-1-(5-phospho-D-ribosyl)imidazole + ADP + phosphate + 2 H(+). It participates in purine metabolism; IMP biosynthesis via de novo pathway; 5-amino-1-(5-phospho-D-ribosyl)imidazole-4-carboxylate from 5-amino-1-(5-phospho-D-ribosyl)imidazole (N5-CAIR route): step 1/2. In terms of biological role, catalyzes the ATP-dependent conversion of 5-aminoimidazole ribonucleotide (AIR) and HCO(3)(-) to N5-carboxyaminoimidazole ribonucleotide (N5-CAIR). This is N5-carboxyaminoimidazole ribonucleotide synthase from Staphylococcus saprophyticus subsp. saprophyticus (strain ATCC 15305 / DSM 20229 / NCIMB 8711 / NCTC 7292 / S-41).